We begin with the raw amino-acid sequence, 779 residues long: Phosphoribosylformylglycinamidine synthase subunit PurL (779 aa).

H52 is a catalytic residue. ATP-binding residues include Y55 and K94. Residue E96 coordinates Mg(2+). Residues 97–100 and R119 each bind substrate; that span reads SHNH. Residue H98 is the Proton acceptor of the active site. D120 contributes to the Mg(2+) binding site. Q243 provides a ligand contact to substrate. D271 contributes to the Mg(2+) binding site. 315–317 contacts substrate; that stretch reads ESQ. N523 and G560 together coordinate ATP. Residue N561 coordinates Mg(2+). S563 serves as a coordination point for substrate.

This sequence belongs to the FGAMS family. As to quaternary structure, monomer. Part of the FGAM synthase complex composed of 1 PurL, 1 PurQ and 2 PurS subunits.

Its subcellular location is the cytoplasm. The catalysed reaction is N(2)-formyl-N(1)-(5-phospho-beta-D-ribosyl)glycinamide + L-glutamine + ATP + H2O = 2-formamido-N(1)-(5-O-phospho-beta-D-ribosyl)acetamidine + L-glutamate + ADP + phosphate + H(+). It participates in purine metabolism; IMP biosynthesis via de novo pathway; 5-amino-1-(5-phospho-D-ribosyl)imidazole from N(2)-formyl-N(1)-(5-phospho-D-ribosyl)glycinamide: step 1/2. Part of the phosphoribosylformylglycinamidine synthase complex involved in the purines biosynthetic pathway. Catalyzes the ATP-dependent conversion of formylglycinamide ribonucleotide (FGAR) and glutamine to yield formylglycinamidine ribonucleotide (FGAM) and glutamate. The FGAM synthase complex is composed of three subunits. PurQ produces an ammonia molecule by converting glutamine to glutamate. PurL transfers the ammonia molecule to FGAR to form FGAM in an ATP-dependent manner. PurS interacts with PurQ and PurL and is thought to assist in the transfer of the ammonia molecule from PurQ to PurL. The sequence is that of Phosphoribosylformylglycinamidine synthase subunit PurL from Prochlorococcus marinus (strain AS9601).